A 232-amino-acid polypeptide reads, in one-letter code: UPF0758 protein Clos_1766 (232 aa).

An MPN domain is found at 110–232 (KIKGPDDVSN…YFSMKEHKLI (123 aa)). His181, His183, and Asp194 together coordinate Zn(2+). Positions 181–194 (HNHPSGDPNPSGED) match the JAMM motif motif.

Belongs to the UPF0758 family.

This is UPF0758 protein Clos_1766 from Alkaliphilus oremlandii (strain OhILAs) (Clostridium oremlandii (strain OhILAs)).